The chain runs to 437 residues: Photosystem II stability/assembly factor HCF136, chloroplastic (437 aa).

This sequence belongs to the Ycf48 family.

The protein localises to the plastid. Its subcellular location is the chloroplast thylakoid membrane. Its function is as follows. Essential for photosystem II (PSII) biogenesis; required for assembly of an early intermediate in PSII assembly that includes D2 (psbD) and cytochrome b559. The protein is Photosystem II stability/assembly factor HCF136, chloroplastic of Cyanidioschyzon merolae (strain NIES-3377 / 10D) (Unicellular red alga).